Here is a 199-residue protein sequence, read N- to C-terminus: Thymidine kinase (199 aa).

ATP contacts are provided by residues 15-22 (GSMFSGKS) and 88-91 (DEVQ). The active-site Proton acceptor is Glu-89. Residues Cys-145, Cys-148, Cys-183, and His-186 each contribute to the Zn(2+) site.

The protein belongs to the thymidine kinase family. In terms of assembly, homotetramer.

The protein resides in the cytoplasm. It catalyses the reaction thymidine + ATP = dTMP + ADP + H(+). This is Thymidine kinase from Staphylococcus saprophyticus subsp. saprophyticus (strain ATCC 15305 / DSM 20229 / NCIMB 8711 / NCTC 7292 / S-41).